Reading from the N-terminus, the 677-residue chain is MTGRVCRGCGGTDIELDAARGDAVCTACGSVLEDNIIVSEVQFVESSGGGSSAVGQFVSLDGAGKTPTLGGGFHVNLGKESRAQTLQNGRRHIHHLGNQLQLNQHCLDTAFNFFKMAVSRHLTRGRKMAHVIAACLYLVCRTEGTPHMLLDLSDLLQVNVYVLGKTFLLLARELCINAPAIDPCLYIPRFAHLLEFGEKNHEVSMTALRLLQRMKRDWMHTGRRPSGLCGAALLVAARMHDFRRTVKEVISVVKVCESTLRKRLTEFEDTPTSQLTIDEFMKIDLEEECDPPSYTAGQRKLRMKQLEQVLSKKLEEVEGEISSYQDAIEIELENSRPKAKGGLASLAKDGSTEDTASSLCGEEDTEDEELEAAASHLNKDLYRELLGGAPGSSEAAGSPEWGGRPPALGSLLDPLPTAASLGISDSIRECISSQSSDPKDASGDGELDLSGIDDLEIDRYILNESEARVKAELWMRENAEYLREQREKEARIAKEKELGIYKEHKPKKSCKRREPIQASTAREAIEKMLEQKKISSKINYSVLRGLSSAGGGSPHREDAQPEHSASARKLSRRRTPASRSGADPVTSVGKRLRPLVSTQPAKKVATGEALLPSSPTLGAEPARPQAVLVESGPVSYHADEEADEEEPDEEDGEPCVSALQMMGSNDYGCDGDEDDGY.

The TFIIB-type zinc-finger motif lies at 2 to 33 (TGRVCRGCGGTDIELDAARGDAVCTACGSVLE). Residues C6, C9, C25, and C28 each contribute to the Zn(2+) site. Tandem repeats lie at residues 91–172 (RHIH…LLAR) and 185–269 (LYIP…EFED). 2 disordered regions span residues 340–368 (KGGL…TEDE) and 385–413 (LLGG…SLLD). Position 365 is a phosphothreonine (T365). S450 is subject to Phosphoserine. Disordered stretches follow at residues 501-521 (YKEH…ASTA) and 544-653 (RGLS…EDGE). At S553 the chain carries Phosphoserine. Over residues 640 to 653 (EEADEEEPDEEDGE) the composition is skewed to acidic residues.

It belongs to the TFIIB family. TFIIIB comprises at least the TATA-binding protein (TBP) and the B-related factor 1 (BRF1/TFIIIB90). Interacts with BDP1. Interacts with MAF1.

Its subcellular location is the nucleus. Its function is as follows. General activator of RNA polymerase which utilizes different TFIIIB complexes at structurally distinct promoters. The isoform 1 is involved in the transcription of tRNA, adenovirus VA1, 7SL and 5S RNA. Isoform 2 is required for transcription of the U6 promoter. In Homo sapiens (Human), this protein is Transcription factor IIIB 90 kDa subunit (BRF1).